Here is a 137-residue protein sequence, read N- to C-terminus: Protein cornichon homolog 3 (137 aa).

3 helical membrane-spanning segments follow: residues 8 to 28 (IISF…LISL), 54 to 74 (ILQG…MALL), and 113 to 133 (LAYI…STLD).

It belongs to the cornichon family.

It is found in the membrane. This chain is Protein cornichon homolog 3, found in Arabidopsis thaliana (Mouse-ear cress).